The following is a 232-amino-acid chain: Phosphatidylserine decarboxylase proenzyme (232 aa).

The active-site Schiff-base intermediate with substrate; via pyruvic acid is the serine 190. A Pyruvic acid (Ser); by autocatalysis modification is found at serine 190.

The protein belongs to the phosphatidylserine decarboxylase family. PSD-A subfamily. As to quaternary structure, heterodimer of a large membrane-associated beta subunit and a small pyruvoyl-containing alpha subunit. The cofactor is pyruvate. In terms of processing, is synthesized initially as an inactive proenzyme. Formation of the active enzyme involves a self-maturation process in which the active site pyruvoyl group is generated from an internal serine residue via an autocatalytic post-translational modification. Two non-identical subunits are generated from the proenzyme in this reaction, and the pyruvate is formed at the N-terminus of the alpha chain, which is derived from the carboxyl end of the proenzyme. The post-translation cleavage follows an unusual pathway, termed non-hydrolytic serinolysis, in which the side chain hydroxyl group of the serine supplies its oxygen atom to form the C-terminus of the beta chain, while the remainder of the serine residue undergoes an oxidative deamination to produce ammonia and the pyruvoyl prosthetic group on the alpha chain.

The protein resides in the cell membrane. The enzyme catalyses a 1,2-diacyl-sn-glycero-3-phospho-L-serine + H(+) = a 1,2-diacyl-sn-glycero-3-phosphoethanolamine + CO2. It participates in phospholipid metabolism; phosphatidylethanolamine biosynthesis; phosphatidylethanolamine from CDP-diacylglycerol: step 2/2. Its function is as follows. Catalyzes the formation of phosphatidylethanolamine (PtdEtn) from phosphatidylserine (PtdSer). This Bradyrhizobium sp. (strain BTAi1 / ATCC BAA-1182) protein is Phosphatidylserine decarboxylase proenzyme.